The primary structure comprises 135 residues: Small ribosomal subunit protein uS11 (135 aa).

A compositionally biased stretch (polar residues) spans 1–10 (MPPKTRSQTG). Positions 1–28 (MPPKTRSQTGAKKVRRKEKKNVAHGHAH) are disordered. Over residues 12-28 (KKVRRKEKKNVAHGHAH) the composition is skewed to basic residues.

It belongs to the universal ribosomal protein uS11 family. As to quaternary structure, part of the 30S ribosomal subunit. Interacts with proteins S7 and S18. Binds to IF-3.

Its function is as follows. Located on the platform of the 30S subunit, it bridges several disparate RNA helices of the 16S rRNA. Forms part of the Shine-Dalgarno cleft in the 70S ribosome. The protein is Small ribosomal subunit protein uS11 of Acidothermus cellulolyticus (strain ATCC 43068 / DSM 8971 / 11B).